A 287-amino-acid polypeptide reads, in one-letter code: Damage-control phosphatase PH1575 (287 aa).

A Subfamily I CxxC motif motif is present at residues 7–10 (CLTC). Mn(2+) is bound by residues Asp-156, Asn-157, and Asp-191. The short motif at 243-246 (GNFE) is the Subfamily I GNFE motif element. The Subfamily I KC motif motif lies at 263 to 264 (KC).

It belongs to the damage-control phosphatase family. Nucleotides phosphatase I subfamily. Mn(2+) is required as a cofactor. Requires Ni(2+) as cofactor. It depends on [2Fe-2S] cluster as a cofactor.

Activity is strongly promoted by Co(2+), Ni(2+), Mg(2+), Mn(2+), Ca(2+), Zn(2+) and Cu(2+). Activity is inhibited by EDTA. Functionally, metal-dependent phosphatase with probable damage-control functions. Shows phosphatase activity against p-nitrophenyl phosphate (pNPP), but natural substrates have not been identified yet. Low phosphatase activity against 8-oxo nucleotides suggests that it could hydrolyze oxidatively damaged purine nucleotides or their biosynthetic intermediates. The polypeptide is Damage-control phosphatase PH1575 (Pyrococcus horikoshii (strain ATCC 700860 / DSM 12428 / JCM 9974 / NBRC 100139 / OT-3)).